The primary structure comprises 245 residues: Eukaryotic translation initiation factor 6 (245 aa).

Y113 is modified (phosphotyrosine). Phosphothreonine is present on T165. At S166 the chain carries Phosphoserine. Residues S174 and S175 each carry the phosphoserine; by CK1 modification. A Phosphoserine; by PKC modification is found at S235. Residues S239 and S243 each carry the phosphoserine modification.

Belongs to the eIF-6 family. Monomer. Associates with the 60S ribosomal subunit. Interacts with RACK1. Interacts with DICER1, AGO2, TARBP2, MOV10 and RPL7A; they form a large RNA-induced silencing complex (RISC). Post-translationally, phosphorylation at Ser-174 and Ser-175 by CSNK1D/CK1 promotes nuclear export. Ufmylated by UFL1. As to expression, expressed at very high levels in colon carcinoma with lower levels in normal colon and ileum and lowest levels in kidney and muscle (at protein level).

The protein resides in the cytoplasm. Its subcellular location is the nucleus. The protein localises to the nucleolus. Binds to the 60S ribosomal subunit and prevents its association with the 40S ribosomal subunit to form the 80S initiation complex in the cytoplasm. Behaves as a stimulatory translation initiation factor downstream insulin/growth factors. Is also involved in ribosome biogenesis. Associates with pre-60S subunits in the nucleus and is involved in its nuclear export. Cytoplasmic release of TIF6 from 60S subunits and nuclear relocalization is promoted by a RACK1 (RACK1)-dependent protein kinase C activity. In tissues responsive to insulin, controls fatty acid synthesis and glycolysis by exerting translational control of adipogenic transcription factors such as CEBPB, CEBPD and ATF4 that have G/C rich or uORF in their 5'UTR. Required for ROS-dependent megakaryocyte maturation and platelets formation, controls the expression of mitochondrial respiratory chain genes involved in reactive oxygen species (ROS) synthesis. Involved in miRNA-mediated gene silencing by the RNA-induced silencing complex (RISC). Required for both miRNA-mediated translational repression and miRNA-mediated cleavage of complementary mRNAs by RISC. Modulates cell cycle progression and global translation of pre-B cells, its activation seems to be rate-limiting in tumorigenesis and tumor growth. This chain is Eukaryotic translation initiation factor 6, found in Homo sapiens (Human).